The chain runs to 195 residues: Thymidine kinase (195 aa).

ATP contacts are provided by residues 9-16 (STMNAGKS) and 87-90 (DEAQ). The Proton acceptor role is filled by Glu-88. The Zn(2+) site is built by Cys-145, Cys-147, Cys-182, and His-185.

The protein belongs to the thymidine kinase family. As to quaternary structure, homotetramer.

The protein resides in the cytoplasm. It catalyses the reaction thymidine + ATP = dTMP + ADP + H(+). The protein is Thymidine kinase of Mannheimia succiniciproducens (strain KCTC 0769BP / MBEL55E).